We begin with the raw amino-acid sequence, 193 residues long: uncharacterized protein (193 aa).

An N-terminal signal peptide occupies residues 1 to 22 (MAVQKNVIKGILAGTFALMLSG). The N-palmitoyl cysteine moiety is linked to residue cysteine 23. Cysteine 23 is lipidated: S-diacylglycerol cysteine.

It is found in the cell membrane. This is an uncharacterized protein from Escherichia coli (strain K12).